A 221-amino-acid chain; its full sequence is Adenylate kinase (221 aa).

10 to 15 (GAGKGT) provides a ligand contact to ATP. Residues 30-59 (STGDMLRAAVKAGTPLGLEAKRFMDAGELV) are NMP. Residues T31, R36, 57–59 (ELV), 85–88 (GFPR), and Q92 each bind AMP. Positions 122–159 (GRRSHAASGRTYHVKFNPPKVEGLDDVTGEPLIQRDDD) are LID. Residues R123 and 132–133 (TY) each bind ATP. AMP-binding residues include R156 and R167. An ATP-binding site is contributed by G207.

Belongs to the adenylate kinase family. Monomer.

Its subcellular location is the cytoplasm. It catalyses the reaction AMP + ATP = 2 ADP. It functions in the pathway purine metabolism; AMP biosynthesis via salvage pathway; AMP from ADP: step 1/1. Functionally, catalyzes the reversible transfer of the terminal phosphate group between ATP and AMP. Plays an important role in cellular energy homeostasis and in adenine nucleotide metabolism. The sequence is that of Adenylate kinase from Paraburkholderia xenovorans (strain LB400).